A 1087-amino-acid polypeptide reads, in one-letter code: DYRK-family kinase pom1 (1087 aa).

Disordered stretches follow at residues 57-81 (CPNRQSSSSTAADTSPSTNASNTNI), 120-182 (LLRS…SKSF), 238-308 (MAPK…LSTI), and 336-578 (NHSH…PSLS). Over residues 62 to 81 (SSSSTAADTSPSTNASNTNI) the composition is skewed to low complexity. Polar residues-rich tracts occupy residues 132-165 (KNSPRNSIHRLSNISIGNNPIDFESSQQNNPSSL) and 246-256 (WRHTNFHSTSH). Residues 292–307 (SGSLTKSSSESKNLST) are compositionally biased toward low complexity. Polar residues predominate over residues 336 to 361 (NHSHVGSQTKSHSFATPSVFDNNKPV). Over residues 362–373 (SSDNHNNTTTSS) the composition is skewed to low complexity. Over residues 397 to 407 (VDGHRNHEAKH) the composition is skewed to basic and acidic residues. Positions 429–442 (RGGFFSRLSFSRSS) are enriched in low complexity. Residues 478-488 (NGKKTPTRTKS) are compositionally biased toward basic residues. Ser513 carries the post-translational modification Phosphoserine. A compositionally biased stretch (basic and acidic residues) spans 527 to 536 (VSREPEKPEE). Positions 555 to 578 (QQRSVSYTPKRSSDTSESLQPSLS) are enriched in polar residues. In terms of domain architecture, Protein kinase spans 699-995 (YEVVDFLGKG…PQQAAQHDFL (297 aa)). ATP is bound by residues 705–713 (LGKGSFGQV) and Lys728. The Proton acceptor role is filled by Asp825. 2 disordered regions span residues 992-1011 (HDFLTGKQDVRRPNTAPARQ) and 1017-1056 (PNIETAPIPRPLPNLPMEYNDHTLPSPKEPSNQASNLVRS). The span at 1045 to 1055 (EPSNQASNLVR) shows a compositional bias: polar residues.

This sequence belongs to the protein kinase superfamily. CMGC Ser/Thr protein kinase family. MNB/DYRK subfamily. In terms of assembly, interacts with rga4. Interacts with tea4; this interaction triggers pom1 plasma membrane association. Post-translationally, autophosphorylates at the cell cortex to lower lipid affinity and promote membrane release. Dephosphorylation by dis2, regulated by tea4, triggers membrane association.

It localises to the cell tip. It is found in the cell membrane. It catalyses the reaction L-seryl-[protein] + ATP = O-phospho-L-seryl-[protein] + ADP + H(+). The catalysed reaction is L-threonyl-[protein] + ATP = O-phospho-L-threonyl-[protein] + ADP + H(+). It carries out the reaction L-tyrosyl-[protein] + ATP = O-phospho-L-tyrosyl-[protein] + ADP + H(+). In terms of biological role, polarity factor involved in localization of polarized growth and cytokinesis. Forms an intracellular gradient that serves to measure cell length and control mitotic entry. Controls the timing of mitotic commitment by regulating the inhibitory impact of cdr1/cdr2 on wee1 activity. Directly phosphorylates the tail of cdr2 which inhibits cdr2 activation by ssp1. Cdr2 phosphorylation by pom1 also modulates cdr2 association with membranes and inhibits cdr2 interaction with mid1, reducing its clustering ability, possibly via the down-regulation of cdr2 kinase activity. Acts as a negative regulator of mid1 distribution, excluding mid1 from non-growing ends, which prevents division-septum assembly at the cell ends. The pom1 polar gradient also mediates mitotic entry by regulating cdk1. Plays an essential role in proper localization and phosphorylation of a GAP for cdc42, rga4, which ensures bipolar localization of GTP-bound, active cdc42 involved in F-actin formation. Phosphorylates multiple other substrates that function in polarized cell growth, including tea4, mod5, pal1, the Rho GAP rga7, and the Arf GEF syt22. The protein is DYRK-family kinase pom1 of Schizosaccharomyces pombe (strain 972 / ATCC 24843) (Fission yeast).